We begin with the raw amino-acid sequence, 166 residues long: MYCRLNMVYLICALLLIVSLQGTVGARLPQSQKDKEQMLKNVREKIESLQKHYHTTGTEWFGKSVLSSHLHQLNSKASCTCQSLLLDSMLNITETIFQDMRGKAENEETKTSLRDVMTEVKMLRHKYSEEQKVWRELQDIHSVEVNNGKIQKGALNSFLILYDLAY.

The first 26 residues, 1-26, serve as a signal peptide directing secretion; it reads MYCRLNMVYLICALLLIVSLQGTVGA. N-linked (GlcNAc...) asparagine glycosylation occurs at Asn-91.

This sequence belongs to the type II (or gamma) interferon family. As to quaternary structure, homodimer. Strongly expressed in spleen. Also detected at lower levels in gill, kidney, heart, brain and intestine. In immune cell populations, expressed at highest levels in peripheral blood leukocytes and at lower levels in splenocytes, granulocytes, monocytes and macrophages.

It localises to the secreted. In terms of biological role, cytokine which binds to interferon gamma receptor 1 (ifngr1). Has activating effects on primary macrophages. Induces nitric oxide production and phagocytic responses in macrophages. Primes monocytes for production of reactive oxygen intermediates (ROI), although the effect is short-lived. Also has inhibitory effects on monocyte priming by ifng1 (interferon gamma 1) and tnfb (TNF-alpha 2). Stimulates phosphorylation of the JAK/STAT signal transducer stat1, but fails to induce stat1 nuclear localization. Promotes increased expression of a number of genes important for macrophage activity, including the interferon regulatory factors irf2 and irf9. The sequence is that of Interferon gamma-related from Carassius auratus (Goldfish).